Consider the following 460-residue polypeptide: Probable serine/threonine-protein kinase kinase DDB_G0280557 (460 aa).

The Protein kinase domain maps to 102 to 416 (INLKSITDCG…IDQLLAHKYF (315 aa)). ATP is bound by residues Lys-131 and 154 to 162 (QRHFQQHPL). Asp-250 serves as the catalytic Proton acceptor.

This sequence belongs to the protein kinase superfamily. CMGC Ser/Thr protein kinase family. MAP kinase subfamily.

It catalyses the reaction L-seryl-[protein] + ATP = O-phospho-L-seryl-[protein] + ADP + H(+). The catalysed reaction is L-threonyl-[protein] + ATP = O-phospho-L-threonyl-[protein] + ADP + H(+). This is Probable serine/threonine-protein kinase kinase DDB_G0280557 from Dictyostelium discoideum (Social amoeba).